The sequence spans 331 residues: DNA fragmentation factor subunit alpha (331 aa).

An N-acetylmethionine modification is found at Met-1. In terms of domain architecture, CIDE-N spans 17-96; sequence TLKPCLLRRN…ALASNEKWAY (80 aa). At Thr-243 the chain carries Phosphothreonine. The disordered stretch occupies residues 305–331; the sequence is SLRSISASKASPPGDLQNPKRARQDPT. Ser-315 is modified (phosphoserine).

Heterodimer of DFFA and DFFB. Caspase-3 cleaves DFF45 at 2 sites to generate an active factor.

The protein resides in the cytoplasm. In terms of biological role, inhibitor of the caspase-activated DNase (DFF40). The polypeptide is DNA fragmentation factor subunit alpha (DFFA) (Homo sapiens (Human)).